We begin with the raw amino-acid sequence, 279 residues long: Large ribosomal subunit protein uL2 (279 aa).

The segment at 223–279 (MAMNPVDHPMGGGEGKSKSGGGRKHPKSPWGQLAKGLKTRNKKKASTKLIVRGRKAK) is disordered. Residues 232–242 (MGGGEGKSKSG) show a composition bias toward gly residues. Basic residues predominate over residues 259-279 (LKTRNKKKASTKLIVRGRKAK).

It belongs to the universal ribosomal protein uL2 family. As to quaternary structure, part of the 50S ribosomal subunit. Forms a bridge to the 30S subunit in the 70S ribosome.

In terms of biological role, one of the primary rRNA binding proteins. Required for association of the 30S and 50S subunits to form the 70S ribosome, for tRNA binding and peptide bond formation. It has been suggested to have peptidyltransferase activity; this is somewhat controversial. Makes several contacts with the 16S rRNA in the 70S ribosome. This is Large ribosomal subunit protein uL2 from Chlorobaculum tepidum (strain ATCC 49652 / DSM 12025 / NBRC 103806 / TLS) (Chlorobium tepidum).